The primary structure comprises 185 residues: Ribosome-recycling factor (185 aa).

It belongs to the RRF family.

The protein resides in the cytoplasm. In terms of biological role, responsible for the release of ribosomes from messenger RNA at the termination of protein biosynthesis. May increase the efficiency of translation by recycling ribosomes from one round of translation to another. This is Ribosome-recycling factor from Thermosipho melanesiensis (strain DSM 12029 / CIP 104789 / BI429).